A 101-amino-acid chain; its full sequence is Small ribosomal subunit protein uS14 (101 aa).

The protein belongs to the universal ribosomal protein uS14 family. In terms of assembly, part of the 30S ribosomal subunit. Contacts proteins S3 and S10.

Functionally, binds 16S rRNA, required for the assembly of 30S particles and may also be responsible for determining the conformation of the 16S rRNA at the A site. This Psychromonas ingrahamii (strain DSM 17664 / CCUG 51855 / 37) protein is Small ribosomal subunit protein uS14.